The chain runs to 198 residues: Superoxide dismutase [Fe] (198 aa).

Positions 27, 74, 158, and 162 each coordinate Fe cation.

Belongs to the iron/manganese superoxide dismutase family. Homodimer. Fe cation serves as cofactor.

Its subcellular location is the cytoplasm. The catalysed reaction is 2 superoxide + 2 H(+) = H2O2 + O2. Functionally, destroys superoxide anion radicals which are normally produced within the cells and which are toxic to biological systems. The protein is Superoxide dismutase [Fe] (SODB) of Plasmodium falciparum (isolate HB3).